Consider the following 1252-residue polypeptide: Guanine nucleotide exchange factor SDC25 (1252 aa).

The region spanning 26–97 (QPIDVVECTY…PPSFTRSILN (72 aa)) is the SH3 domain. 2 disordered regions span residues 409–454 (IPAS…DTIW) and 623–648 (LNLD…DEYE). Positions 416–428 (TSCSSETSHHSPS) are enriched in low complexity. Residues 782–914 (SNNRIKGGSK…LLKEVNQKFK (133 aa)) enclose the N-terminal Ras-GEF domain. Positions 952–1199 (DPVLFATQLT…YQLSLIIEPK (248 aa)) constitute a Ras-GEF domain. The interval 1201 to 1252 (RKKVVPNSNSNNKSQEKSRDDQTDEGKTSTKKDRFSKFQLHKTKKKAPKVSK) is disordered. Basic and acidic residues predominate over residues 1214–1236 (SQEKSRDDQTDEGKTSTKKDRFS). A compositionally biased stretch (basic residues) spans 1239–1252 (QLHKTKKKAPKVSK).

Its function is as follows. Promotes the exchange of Ras-bound GDP by GTP. In Saccharomyces cerevisiae (strain YJM789) (Baker's yeast), this protein is Guanine nucleotide exchange factor SDC25 (SDC25).